A 303-amino-acid chain; its full sequence is N-acetyl-D-glucosamine kinase (303 aa).

ATP-binding positions include 4 to 11 (GFDIGGTK) and 133 to 140 (GVGGGLIF). H157, C177, C179, and C184 together coordinate Zn(2+).

It belongs to the ROK (NagC/XylR) family. NagK subfamily.

The enzyme catalyses N-acetyl-D-glucosamine + ATP = N-acetyl-D-glucosamine 6-phosphate + ADP + H(+). It participates in cell wall biogenesis; peptidoglycan recycling. Catalyzes the phosphorylation of N-acetyl-D-glucosamine (GlcNAc) derived from cell-wall degradation, yielding GlcNAc-6-P. This is N-acetyl-D-glucosamine kinase from Escherichia fergusonii (strain ATCC 35469 / DSM 13698 / CCUG 18766 / IAM 14443 / JCM 21226 / LMG 7866 / NBRC 102419 / NCTC 12128 / CDC 0568-73).